A 158-amino-acid chain; its full sequence is SsrA-binding protein (158 aa).

Residues 134 to 158 (KLHDKRETEKERDWNRQKSRLLKTG) are disordered. Residues 137–149 (DKRETEKERDWNR) show a composition bias toward basic and acidic residues.

This sequence belongs to the SmpB family.

It is found in the cytoplasm. Its function is as follows. Required for rescue of stalled ribosomes mediated by trans-translation. Binds to transfer-messenger RNA (tmRNA), required for stable association of tmRNA with ribosomes. tmRNA and SmpB together mimic tRNA shape, replacing the anticodon stem-loop with SmpB. tmRNA is encoded by the ssrA gene; the 2 termini fold to resemble tRNA(Ala) and it encodes a 'tag peptide', a short internal open reading frame. During trans-translation Ala-aminoacylated tmRNA acts like a tRNA, entering the A-site of stalled ribosomes, displacing the stalled mRNA. The ribosome then switches to translate the ORF on the tmRNA; the nascent peptide is terminated with the 'tag peptide' encoded by the tmRNA and targeted for degradation. The ribosome is freed to recommence translation, which seems to be the essential function of trans-translation. This chain is SsrA-binding protein, found in Allorhizobium ampelinum (strain ATCC BAA-846 / DSM 112012 / S4) (Agrobacterium vitis (strain S4)).